Consider the following 153-residue polypeptide: Endoribonuclease YbeY (153 aa).

Residues H114, H118, and H124 each contribute to the Zn(2+) site.

It belongs to the endoribonuclease YbeY family. Requires Zn(2+) as cofactor.

Its subcellular location is the cytoplasm. In terms of biological role, single strand-specific metallo-endoribonuclease involved in late-stage 70S ribosome quality control and in maturation of the 3' terminus of the 16S rRNA. The polypeptide is Endoribonuclease YbeY (Shewanella oneidensis (strain ATCC 700550 / JCM 31522 / CIP 106686 / LMG 19005 / NCIMB 14063 / MR-1)).